A 140-amino-acid polypeptide reads, in one-letter code: 3-hydroxyacyl-[acyl-carrier-protein] dehydratase FabZ (140 aa).

Residue His-47 is part of the active site.

This sequence belongs to the thioester dehydratase family. FabZ subfamily.

The protein resides in the cytoplasm. The enzyme catalyses a (3R)-hydroxyacyl-[ACP] = a (2E)-enoyl-[ACP] + H2O. Its function is as follows. Involved in unsaturated fatty acids biosynthesis. Catalyzes the dehydration of short chain beta-hydroxyacyl-ACPs and long chain saturated and unsaturated beta-hydroxyacyl-ACPs. The chain is 3-hydroxyacyl-[acyl-carrier-protein] dehydratase FabZ from Streptococcus gordonii (strain Challis / ATCC 35105 / BCRC 15272 / CH1 / DL1 / V288).